The primary structure comprises 462 residues: L-seryl-tRNA(Sec) selenium transferase (462 aa).

N6-(pyridoxal phosphate)lysine is present on K293.

Belongs to the SelA family. Requires pyridoxal 5'-phosphate as cofactor.

The protein localises to the cytoplasm. It catalyses the reaction L-seryl-tRNA(Sec) + selenophosphate + H(+) = L-selenocysteinyl-tRNA(Sec) + phosphate. Its pathway is aminoacyl-tRNA biosynthesis; selenocysteinyl-tRNA(Sec) biosynthesis; selenocysteinyl-tRNA(Sec) from L-seryl-tRNA(Sec) (bacterial route): step 1/1. In terms of biological role, converts seryl-tRNA(Sec) to selenocysteinyl-tRNA(Sec) required for selenoprotein biosynthesis. The polypeptide is L-seryl-tRNA(Sec) selenium transferase (Clostridium botulinum (strain Loch Maree / Type A3)).